The following is a 546-amino-acid chain: Amidophosphoribosyltransferase (546 aa).

A compositionally biased stretch (low complexity) spans 1-26 (MSAPQQQQQSQQKQQQHVRVVEQQQV). The segment at 1–39 (MSAPQQQQQSQQKQQQHVRVVEQQQVEPAEAVTSSMESE) is disordered. A propeptide spanning residues 1 to 53 (MSAPQQQQQSQQKQQQHVRVVEQQQVEPAEAVTSSMESESISASKELTGLTHE) is cleaved from the precursor. C54 functions as the Nucleophile in the catalytic mechanism. The region spanning 54–302 (CGVFGAIACG…PGEIVELSRS (249 aa)) is the Glutamine amidotransferase type-2 domain. Residue S113 is modified to Phosphoserine. A Phosphothreonine modification is found at T114. S120 is modified (phosphoserine). C321 provides a ligand contact to [4Fe-4S] cluster. The Mg(2+) site is built by S368, D430, and D431. Positions 467, 528, and 531 each coordinate [4Fe-4S] cluster.

It in the C-terminal section; belongs to the purine/pyrimidine phosphoribosyltransferase family. Mg(2+) is required as a cofactor. Requires [4Fe-4S] cluster as cofactor.

It carries out the reaction 5-phospho-beta-D-ribosylamine + L-glutamate + diphosphate = 5-phospho-alpha-D-ribose 1-diphosphate + L-glutamine + H2O. The protein operates within purine metabolism; IMP biosynthesis via de novo pathway; N(1)-(5-phospho-D-ribosyl)glycinamide from 5-phospho-alpha-D-ribose 1-diphosphate: step 1/2. Its function is as follows. Involved in the first step (and regulatory point) of the de novo biosynthesis of purine nucleotides, where it catalyzes the transfer of glutamine amide to 5-phospho-alpha-D-ribose 1-diphosphate. The protein is Amidophosphoribosyltransferase (Prat) of Drosophila melanogaster (Fruit fly).